We begin with the raw amino-acid sequence, 209 residues long: Large ribosomal subunit protein uL3 (209 aa).

Positions 126 to 165 are disordered; that stretch reads HNFGGGSRTHGQSDRLRAPGSVGGSSDPSRTFRGTRMAGR.

It belongs to the universal ribosomal protein uL3 family. In terms of assembly, part of the 50S ribosomal subunit. Forms a cluster with proteins L14 and L19.

One of the primary rRNA binding proteins, it binds directly near the 3'-end of the 23S rRNA, where it nucleates assembly of the 50S subunit. The sequence is that of Large ribosomal subunit protein uL3 from Chlorobium limicola (strain DSM 245 / NBRC 103803 / 6330).